Here is a 557-residue protein sequence, read N- to C-terminus: Aerobic glycerol-3-phosphate dehydrogenase (557 aa).

An FAD-binding site is contributed by 21–49 (DVVIVGGGITGAGIALDASNRGMKVALVE).

This sequence belongs to the FAD-dependent glycerol-3-phosphate dehydrogenase family. FAD serves as cofactor.

The protein resides in the cytoplasm. It catalyses the reaction a quinone + sn-glycerol 3-phosphate = dihydroxyacetone phosphate + a quinol. It functions in the pathway polyol metabolism; glycerol degradation via glycerol kinase pathway; glycerone phosphate from sn-glycerol 3-phosphate (aerobic route): step 1/1. The protein is Aerobic glycerol-3-phosphate dehydrogenase (glpD) of Staphylococcus epidermidis (strain ATCC 35984 / DSM 28319 / BCRC 17069 / CCUG 31568 / BM 3577 / RP62A).